Here is a 241-residue protein sequence, read N- to C-terminus: Probable 2-phosphosulfolactate phosphatase (241 aa).

The protein belongs to the ComB family. Mg(2+) serves as cofactor.

The catalysed reaction is (2R)-O-phospho-3-sulfolactate + H2O = (2R)-3-sulfolactate + phosphate. In Microcystis aeruginosa (strain NIES-843 / IAM M-2473), this protein is Probable 2-phosphosulfolactate phosphatase.